Reading from the N-terminus, the 529-residue chain is Auxin response factor 13 (529 aa).

The segment at 1–22 (MARPPAATAPPPPPPPPPPPPP) is disordered. Pro residues predominate over residues 7–22 (ATAPPPPPPPPPPPPP). A DNA-binding region (TF-B3) is located at residues 128 to 234 (YAKQLTQSDA…KLLVGVRRAA (107 aa)). Disordered regions lie at residues 443–462 (IVTP…PLSA) and 497–529 (PEGV…GARL). Positions 444–461 (VTPQNGSPPDNPVNTPLS) are enriched in polar residues. A compositionally biased stretch (acidic residues) spans 499–510 (GVDDETATEEAS). The segment covering 511–523 (DTSLPDSLTNGHN) has biased composition (polar residues).

This sequence belongs to the ARF family. Homo and heterodimers. In terms of tissue distribution, expressed in roots, culms, leaves and young panicles.

It localises to the nucleus. Auxin response factors (ARFs) are transcriptional factors that bind specifically to the DNA sequence 5'-TGTCTC-3' found in the auxin-responsive promoter elements (AuxREs). In Oryza sativa subsp. japonica (Rice), this protein is Auxin response factor 13 (ARF13).